A 311-amino-acid polypeptide reads, in one-letter code: Ornithine carbamoyltransferase (311 aa).

Carbamoyl phosphate-binding positions include 54-58, asparagine 81, arginine 104, and 131-134; these read STRTR and HPCQ. L-ornithine-binding positions include asparagine 164, aspartate 225, and 229 to 230; that span reads DM. Carbamoyl phosphate-binding positions include 268 to 271, threonine 279, and arginine 297; that span reads HDMP.

This sequence belongs to the aspartate/ornithine carbamoyltransferase superfamily. OTCase family.

Its subcellular location is the cytoplasm. It catalyses the reaction carbamoyl phosphate + L-ornithine = L-citrulline + phosphate + H(+). Its pathway is amino-acid biosynthesis; L-arginine biosynthesis; L-arginine from L-ornithine and carbamoyl phosphate: step 1/3. Reversibly catalyzes the transfer of the carbamoyl group from carbamoyl phosphate (CP) to the N(epsilon) atom of ornithine (ORN) to produce L-citrulline. The chain is Ornithine carbamoyltransferase (argF) from Leptospira interrogans serogroup Icterohaemorrhagiae serovar copenhageni (strain Fiocruz L1-130).